The primary structure comprises 464 residues: Dolichyl-diphosphooligosaccharide--protein glycosyltransferase subunit 1B (464 aa).

The first 24 residues, 1–24 (MAARIGIFSVFVAVLLSISAFSSA), serve as a signal peptide directing secretion. The Lumenal portion of the chain corresponds to 25–436 (QDLQIVNAER…TFKPIYMLAE (412 aa)). N106 and N298 each carry an N-linked (GlcNAc...) asparagine glycan. Residue K310 forms a Glycyl lysine isopeptide (Lys-Gly) (interchain with G-Cter in ubiquitin) linkage. Residue N352 is glycosylated (N-linked (GlcNAc...) asparagine). The chain crosses the membrane as a helical span at residues 437-457 (PFMLVSAFFLVFVASLAYVHI). At 458–464 (DLNIVRK) the chain is on the cytoplasmic side.

It belongs to the OST1 family. Component of the oligosaccharyltransferase (OST) complex.

It is found in the endoplasmic reticulum membrane. It functions in the pathway protein modification; protein glycosylation. Subunit of the oligosaccharyl transferase (OST) complex that catalyzes the initial transfer of a defined glycan (Glc(3)Man(9)GlcNAc(2) in eukaryotes) from the lipid carrier dolichol-pyrophosphate to an asparagine residue within an Asn-X-Ser/Thr consensus motif in nascent polypeptide chains, the first step in protein N-glycosylation. N-glycosylation occurs cotranslationally and the complex associates with the Sec61 complex at the channel-forming translocon complex that mediates protein translocation across the endoplasmic reticulum (ER). All subunits are required for a maximal enzyme activity. The polypeptide is Dolichyl-diphosphooligosaccharide--protein glycosyltransferase subunit 1B (OST1B) (Arabidopsis thaliana (Mouse-ear cress)).